We begin with the raw amino-acid sequence, 528 residues long: Light-independent protochlorophyllide reductase subunit B (528 aa).

[4Fe-4S] cluster is bound at residue aspartate 36. The active-site Proton donor is the aspartate 274. 409–410 (GL) is a binding site for substrate. Residues 429–471 (GPSHHGGHAPKPMHDAPAASAAAGAEASMAEETAAPSQDAPAA) are disordered. Low complexity predominate over residues 444–465 (APAASAAAGAEASMAEETAAPS).

It belongs to the ChlB/BchB/BchZ family. In terms of assembly, protochlorophyllide reductase is composed of three subunits; BchL, BchN and BchB. Forms a heterotetramer of two BchB and two BchN subunits. It depends on [4Fe-4S] cluster as a cofactor.

The catalysed reaction is chlorophyllide a + oxidized 2[4Fe-4S]-[ferredoxin] + 2 ADP + 2 phosphate = protochlorophyllide a + reduced 2[4Fe-4S]-[ferredoxin] + 2 ATP + 2 H2O. Its pathway is porphyrin-containing compound metabolism; bacteriochlorophyll biosynthesis (light-independent). In terms of biological role, component of the dark-operative protochlorophyllide reductase (DPOR) that uses Mg-ATP and reduced ferredoxin to reduce ring D of protochlorophyllide (Pchlide) to form chlorophyllide a (Chlide). This reaction is light-independent. The NB-protein (BchN-BchB) is the catalytic component of the complex. The polypeptide is Light-independent protochlorophyllide reductase subunit B (Dinoroseobacter shibae (strain DSM 16493 / NCIMB 14021 / DFL 12)).